We begin with the raw amino-acid sequence, 175 residues long: Large ribosomal subunit protein uL30 (175 aa).

Belongs to the universal ribosomal protein uL30 family. In terms of assembly, part of the 50S ribosomal subunit.

This Pyrobaculum neutrophilum (strain DSM 2338 / JCM 9278 / NBRC 100436 / V24Sta) (Thermoproteus neutrophilus) protein is Large ribosomal subunit protein uL30.